Consider the following 293-residue polypeptide: Germ cell-specific gene 1-like protein 2 (293 aa).

Residues 1 to 8 (MDRAKQQQ) lie on the Cytoplasmic side of the membrane. A helical membrane pass occupies residues 9 to 29 (ALLLLPVCLALTFSLTAVVSS). At 30 to 120 (HWCEGTRRVV…RSVVPAEEQG (91 aa)) the chain is on the extracellular side. 2 N-linked (GlcNAc...) asparagine glycosylation sites follow: N59 and N67. Residues 121–141 (VLWLSIGGEVLDIVLILTSAI) form a helical membrane-spanning segment. At 142-160 (LLGSRVSCRSPGFHWLRVD) the chain is on the cytoplasmic side. The helical transmembrane segment at 161 to 181 (ALVAIFMVLAGLLGMVAHMMY) threads the bilayer. Over 182-204 (TTIFQITVNLGPEDWKPQTWDYG) the chain is Extracellular. The chain crosses the membrane as a helical span at residues 205-225 (WSYCLAWGSFALCLAVSVSAM). Over 226 to 293 (SRFTAARLEF…PGAPGKVSIC (68 aa)) the chain is Cytoplasmic.

This sequence belongs to the GSG1 family.

The protein resides in the membrane. The sequence is that of Germ cell-specific gene 1-like protein 2 from Homo sapiens (Human).